We begin with the raw amino-acid sequence, 341 residues long: Elongation factor Ts (341 aa).

Positions 80 to 83 (TDFV) are involved in Mg(2+) ion dislocation from EF-Tu.

Belongs to the EF-Ts family.

It is found in the cytoplasm. Its function is as follows. Associates with the EF-Tu.GDP complex and induces the exchange of GDP to GTP. It remains bound to the aminoacyl-tRNA.EF-Tu.GTP complex up to the GTP hydrolysis stage on the ribosome. This chain is Elongation factor Ts, found in Lactobacillus helveticus (strain DPC 4571).